The sequence spans 887 residues: Tiger protein O1 (887 aa).

The first 21 residues, 1 to 21, serve as a signal peptide directing secretion; that stretch reads MEKKLLIIVIVFLFSTIQVFC. Residues 22–845 lie on the Extracellular side of the membrane; sequence RIDDKTFVIS…SLSKKSIILL (824 aa). N-linked (GlcNAc...) asparagine glycosylation is found at asparagine 32, asparagine 70, asparagine 186, asparagine 207, asparagine 219, asparagine 259, asparagine 297, asparagine 314, asparagine 325, asparagine 338, asparagine 354, asparagine 393, asparagine 431, asparagine 588, asparagine 629, asparagine 652, asparagine 687, asparagine 710, asparagine 720, asparagine 730, asparagine 775, asparagine 788, asparagine 811, and asparagine 816. The 89-residue stretch at 277 to 365 folds into the IPT/TIG 1 domain; the sequence is NSVPYSKGGL…TNENKLLFNY (89 aa). An IPT/TIG 2 domain is found at 710–767; sequence NTSSINVNGGNLTIYGKNFYNVSNIKVEVDNQLKCNKIEFINLNSLTCFLPPFIETLF. The disordered stretch occupies residues 811 to 835; that stretch reads NDTSENSTNDILNHEKNNNNQKDGS. Residues 846 to 866 traverse the membrane as a helical segment; sequence SILLPSFIILIVSLAIVILVI. Residues 867–887 are Cytoplasmic-facing; it reads KRNKTKHSKNMSSKEKELMKQ.

The protein resides in the membrane. In Dictyostelium discoideum (Social amoeba), this protein is Tiger protein O1 (tgrO1).